The chain runs to 533 residues: Calcium-dependent protein kinase 19 (533 aa).

Polar residues-rich tracts occupy residues 1-12 (MGSCCSRATSPD) and 24-38 (SHQTKPAQTTPSYNH). The segment at 1–53 (MGSCCSRATSPDSGRGGANGYGYSHQTKPAQTTPSYNHPQPPPPAEVRYTPSA) is disordered. Gly-2 carries N-myristoyl glycine lipidation. Residues 85-343 (YSLGKELGRG…SAQVLQHPWL (259 aa)) enclose the Protein kinase domain. ATP contacts are provided by residues 91–99 (LGRGQFGVT) and Lys-114. The active-site Proton acceptor is Asp-209. The autoinhibitory domain stretch occupies residues 348-378 (ASDKPIDSAVLSRMKQFRAMNKLKKMALKVI). 4 EF-hand domains span residues 385-420 (EEIKGLKQMFTNMDTDNSGTITYEELKAGLAKLGSK), 421-456 (LSEAEVKQLMEAADVDGNGSIDYVEFITATMHRHKL), 457-492 (ERDEHLFKAFQYFDKDNSGFITRDELESALIEHEMG), and 497-527 (IKDIISEVDTDNDGRINYEEFCAMMRGGGMQ). 19 residues coordinate Ca(2+): Asp-398, Asp-400, Ser-402, Thr-404, Glu-409, Asp-434, Asp-436, Asn-438, Ser-440, Glu-445, Asp-470, Asp-472, Ser-474, Glu-481, Asp-505, Asp-507, Asp-509, Arg-511, and Glu-516.

The protein belongs to the protein kinase superfamily. Ser/Thr protein kinase family. CDPK subfamily. Expressed in root tips, leaf veins, mesophyll cells, flower reproductive organs and mature pollen grains.

It is found in the membrane. The catalysed reaction is L-seryl-[protein] + ATP = O-phospho-L-seryl-[protein] + ADP + H(+). It catalyses the reaction L-threonyl-[protein] + ATP = O-phospho-L-threonyl-[protein] + ADP + H(+). Its activity is regulated as follows. Activated by calcium. Autophosphorylation may play an important role in the regulation of the kinase activity. Its function is as follows. May play a role in signal transduction pathways that involve calcium as a second messenger. This Oryza sativa subsp. japonica (Rice) protein is Calcium-dependent protein kinase 19.